Reading from the N-terminus, the 282-residue chain is E3 ubiquitin-protein ligase SIAH1 (282 aa).

A compositionally biased stretch (polar residues) spans 1-17 (MSRQTATALPTGTSKCP). Residues 1–22 (MSRQTATALPTGTSKCPPSQRV) form a disordered region. S19 bears the Phosphoserine; by ATM and ATR mark. An RING-type zinc finger spans residues 41–76 (CPVCFDYVLPPILQCQSGHLVCSNCRPKLTCCPTCR). Positions 90 to 282 (VANSVLFPCK…LGINVTISMC (193 aa)) are SBD. The segment at 93-153 (SVLFPCKYAS…VMPHLMHQHK (61 aa)) adopts an SIAH-type zinc-finger fold. 8 residues coordinate Zn(2+): C98, C105, H117, C121, C128, C135, H147, and H152.

It belongs to the SINA (Seven in absentia) family. In terms of assembly, homodimer. Component of some large E3 complex composed of UBE2D1, SIAH1, CACYBP/SIP, SKP1, APC and TBL1X. Interacts with UBE2I. Interacts with alpha-tubulin. Interacts with PEG10, which may inhibit its activity. Interacts with PEG3 and HIPK2. Interacts with group 1 glutamate receptors GRM1 and GRM5. Interacts with DAB1, which may inhibit its activity. Interacts with UBE2E2. Interacts with SNCAIP. Interacts with HIPK2; the interaction is promoted by DAZAP2 and results in SIAH1-mediated ubiquitination and subsequent proteasomal degradation of HIPK2. Interacts with DAZAP2; the interaction is decreased following phosphorylation of DAZAP2 by HIPK2. Interacts with GAPDH; leading to stabilize SIAH1. Interacts with Bassoon/BSN and Piccolo/PLCO; these interactions negatively regulate SIAH1 E3 ligase activity. Interacts with DCC. Interacts with AXIN1; catalyzes AXIN1 ubiquitination and subsequent proteasome-mediated ubiquitin-dependent degradation. Post-translationally, phosphorylated on Ser-19 by ATM and ATR. This phosphorylation disrupts SIAH1 interaction with HIPK2, and subsequent proteasomal degradation of HIPK2.

Its subcellular location is the cytoplasm. The protein resides in the nucleus. It carries out the reaction S-ubiquitinyl-[E2 ubiquitin-conjugating enzyme]-L-cysteine + [acceptor protein]-L-lysine = [E2 ubiquitin-conjugating enzyme]-L-cysteine + N(6)-ubiquitinyl-[acceptor protein]-L-lysine.. Its pathway is protein modification; protein ubiquitination. In terms of biological role, E3 ubiquitin-protein ligase that mediates ubiquitination and subsequent proteasomal degradation of target proteins. E3 ubiquitin ligases accept ubiquitin from an E2 ubiquitin-conjugating enzyme in the form of a thioester and then directly transfers the ubiquitin to targeted substrates. Mediates E3 ubiquitin ligase activity either through direct binding to substrates or by functioning as the essential RING domain subunit of larger E3 complexes. Triggers the ubiquitin-mediated degradation of many substrates, including proteins involved in transcription regulation (ELL2, MYB, POU2AF1, PML and RBBP8), a cell surface receptor (DCC), cytoplasmic signal transduction molecules (KLF10/TIEG1 and NUMB), an antiapoptotic protein (BAG1), a microtubule motor protein (KIF22), a protein involved in synaptic vesicle function in neurons (SYP), a structural protein (CTNNB1) and SNCAIP. Confers constitutive instability to HIPK2 through proteasomal degradation. It is thereby involved in many cellular processes such as apoptosis, tumor suppression, cell cycle, axon guidance, transcription, spermatogenesis and TNF-alpha signaling. Has some overlapping function with SIAH2. Induces apoptosis in cooperation with PEG3. Upon nitric oxid (NO) generation that follows apoptotic stimulation, interacts with S-nitrosylated GAPDH, mediating the translocation of GAPDH to the nucleus. GAPDH acts as a stabilizer of SIAH1, facilitating the degradation of nuclear proteins. Mediates ubiquitination and degradation of EGLN2 and EGLN3 in response to the unfolded protein response (UPR), leading to their degradation and subsequent stabilization of ATF4. Also part of the Wnt signaling pathway in which it mediates the Wnt-induced ubiquitin-mediated proteasomal degradation of AXIN1. The chain is E3 ubiquitin-protein ligase SIAH1 (Siah1) from Rattus norvegicus (Rat).